A 259-amino-acid chain; its full sequence is MTDLKASSLRALKLMDLTTLNDDDTDEKVIALCHQAKTPVGNTAAICIYPRFIPIARKTLKEQGTPEIRIATVTNFPHGNDDIEIALAETRAAIAYGADEVDVVFPYRALMAGDEQVGFDLVKACKEACAAANVLLKVIIETGELKDEALIRKASEISIKAGADFIKTSTGKVAVNATPESARIMMEVIRDMGVEKTVGFKPAGGVRTAEDAQKYLAIADELFGADWADARHYRFGASSLLASLLKALGHGDGKSASSY.

Residue aspartate 102 is the Proton donor/acceptor of the active site. Lysine 167 functions as the Schiff-base intermediate with acetaldehyde in the catalytic mechanism. The Proton donor/acceptor role is filled by lysine 201.

Belongs to the DeoC/FbaB aldolase family. DeoC type 2 subfamily.

The protein resides in the cytoplasm. It carries out the reaction 2-deoxy-D-ribose 5-phosphate = D-glyceraldehyde 3-phosphate + acetaldehyde. Its pathway is carbohydrate degradation; 2-deoxy-D-ribose 1-phosphate degradation; D-glyceraldehyde 3-phosphate and acetaldehyde from 2-deoxy-alpha-D-ribose 1-phosphate: step 2/2. Its function is as follows. Catalyzes a reversible aldol reaction between acetaldehyde and D-glyceraldehyde 3-phosphate to generate 2-deoxy-D-ribose 5-phosphate. This chain is Deoxyribose-phosphate aldolase, found in Shigella flexneri.